The following is a 717-amino-acid chain: Mitochondrial potassium channel ATP-binding subunit (717 aa).

Residues 1-25 constitute a mitochondrion transit peptide; the sequence is MLVHLFRFGIRGGPVPGWSLQSLRF. 4 helical membrane-spanning segments follow: residues 127-147, 178-198, 278-298, and 365-385; these read LLALGAAIVLALGAALVNVQI, VQLLLLYGVQGLLTFGYLVLL, LMLAVVTPALMGVGTLMGSGL, and NIAFNCMVLGTLFIGGSLVAG. One can recognise an ABC transmembrane type-1 domain in the interval 132–419; it reads AAIVLALGAA…LSVLFGQVVR (288 aa). Residues 454 to 691 form the ABC transporter domain; it reads ITFQNVTFSY…GGLYSELIRR (238 aa). ATP is bound at residue 489 to 496; sequence GQSGGGKT. The interval 695-717 is disordered; it reads DASLTSTPPAEKPEDPKSCQSKA.

This sequence belongs to the ABC transporter superfamily. ABCB family. Multidrug resistance exporter (TC 3.A.1.201) subfamily. The mitochondrial potassium channel (mitoK(ATP)) is composed of 4 subunits of CCDC51/MITOK and 4 subunits of ABCB8/MITOSUR. Interacts with PAAT. Interacts with NRP1; NRP1 regulates ABCB8/MITOSUR protein levels in mitochondria.

It is found in the mitochondrion inner membrane. With respect to regulation, channel activity inhibited by ATP via ABCB8/MITOSUR subunit. Its function is as follows. ATP-binding subunit of the mitochondrial ATP-gated potassium channel (mitoK(ATP)). Together with pore-forming subunit CCDC51/MITOK of the mitoK(ATP) channel, mediates ATP-dependent potassium currents across the mitochondrial inner membrane. An increase in ATP intracellular levels closes the channel, inhibiting K(+) transport, whereas a decrease in ATP levels enhances K(+) uptake in the mitochondrial matrix. Plays a role in mitochondrial iron transport. Required for maintenance of normal cardiac function, possibly by influencing mitochondrial iron export and regulating the maturation of cytosolic iron sulfur cluster-containing enzymes. This is Mitochondrial potassium channel ATP-binding subunit from Mus musculus (Mouse).